Reading from the N-terminus, the 583-residue chain is uncharacterized protein (583 aa).

The FAD-binding FR-type domain maps to 162-424 (YGIFAAPILD…RGVQQNPFAK (263 aa)).

It belongs to the flavoprotein pyridine nucleotide cytochrome reductase family. FAD serves as cofactor.

It is found in the mitochondrion. This is an uncharacterized protein from Schizosaccharomyces pombe (strain 972 / ATCC 24843) (Fission yeast).